Consider the following 214-residue polypeptide: Pyridoxine/pyridoxamine 5'-phosphate oxidase (214 aa).

Substrate contacts are provided by residues 8-11 (RINY) and Lys66. Residues 61–66 (RIVLIK), 76–77 (FT), Arg82, Lys83, and Gln105 contribute to the FMN site. Positions 123, 127, and 131 each coordinate substrate. Residues 140-141 (QS) and Trp184 each bind FMN. 190–192 (RLH) is a substrate binding site. Arg194 is an FMN binding site.

Belongs to the pyridoxamine 5'-phosphate oxidase family. Homodimer. FMN is required as a cofactor.

It carries out the reaction pyridoxamine 5'-phosphate + O2 + H2O = pyridoxal 5'-phosphate + H2O2 + NH4(+). The catalysed reaction is pyridoxine 5'-phosphate + O2 = pyridoxal 5'-phosphate + H2O2. Its pathway is cofactor metabolism; pyridoxal 5'-phosphate salvage; pyridoxal 5'-phosphate from pyridoxamine 5'-phosphate: step 1/1. It functions in the pathway cofactor metabolism; pyridoxal 5'-phosphate salvage; pyridoxal 5'-phosphate from pyridoxine 5'-phosphate: step 1/1. Functionally, catalyzes the oxidation of either pyridoxine 5'-phosphate (PNP) or pyridoxamine 5'-phosphate (PMP) into pyridoxal 5'-phosphate (PLP). This is Pyridoxine/pyridoxamine 5'-phosphate oxidase from Burkholderia ambifaria (strain ATCC BAA-244 / DSM 16087 / CCUG 44356 / LMG 19182 / AMMD) (Burkholderia cepacia (strain AMMD)).